A 1211-amino-acid polypeptide reads, in one-letter code: MDPPAGAARRLLCPALLLLLLLLPPPLLPPPPPPANARLAAAADPPGGPLGHGAERILAVPVRTDAQGRLVSHVVSAATSRAGVRARRAAPVRTPSFPGGNEEEPGSHLFYNVTVFGRDLHLRLRPNARLVAPGATMEWQGEKGTTRVEPLLGSCLYVGDVAGLAEASSVALSNCDGLAGLIRMEEEEFFIEPLEKGLAAQEAEQGRVHVVYRRPPTSPPLGGPQALDTGASLDSLDSLSRALGVLEEHANSSRRRARRHAADDDYNIEVLLGVDDSVVQFHGKEHVQKYLLTLMNIVNEIYHDESLGAHINVVLVRIILLSYGKSMSLIEIGNPSQSLENVCRWAYLQQKPDTGHDEYHDHAIFLTRQDFGPSGMQGYAPVTGMCHPVRSCTLNHEDGFSSAFVVAHETGHVLGMEHDGQGNRCGDEVRLGSIMAPLVQAAFHRFHWSRCSQQELSRYLHSYDCLLDDPFAHDWPALPQLPGLHYSMNEQCRFDFGLGYMMCTAFRTFDPCKQLWCSHPDNPYFCKTKKGPPLDGTMCAPGKHCFKGHCIWLTPDILKRDGSWGAWSPFGSCSRTCGTGVKFRTRQCDNPHPANGGRTCSGLAYDFQLCSRQDCPDSLADFREEQCRQWDLYFEHGDAQHHWLPHEHRDAKERCHLYCESRETGEVVSMKRMVHDGTRCSYKDAFSLCVRGDCRKVGCDGVIGSSKQEDKCGVCGGDNSHCKVVKGTFTRSPKKHGYIKMFEIPAGARHLLIQEVDATSHHLAVKNLETGKFILNEENDVDASSKTFIAMGVEWEYRDEDGRETLQTMGPLHGTITVLVIPVGDTRVSLTYKYMIHEDSLNVDDNNVLEEDSVVYEWALKKWSPCSKPCGGGSQFTKYGCRRRLDHKMVHRGFCAALSKPKAIRRACNPQECSQPVWVTGEWEPCSQTCGRTGMQVRSVRCIQPLHDNTTRSVHAKHCNDARPESRRACSRELCPGRWRAGPWSQCSVTCGNGTQERPVLCRTADDSFGICQEERPETARTCRLGPCPRNISDPSKKSYVVQWLSRPDPDSPIRKISSKGHCQGDKSIFCRMEVLSRYCSIPGYNKLCCKSCNLYNNLTNVEGRIEPPPGKHNDIDVFMPTLPVPTVAMEVRPSPSTPLEVPLNASSTNATEDHPETNAVDEPYKIHGLEDEVQPPNLIPRRPSPYEKTRNQRIQELIDEMRKKEMLGKF.

Residues 1–29 (MDPPAGAARRLLCPALLLLLLLLPPPLLP) form the signal peptide. A propeptide spanning residues 30-253 (PPPPPANARL…GVLEEHANSS (224 aa)) is cleaved from the precursor. N-linked (GlcNAc...) asparagine glycans are attached at residues Asn-112 and Asn-251. The Peptidase M12B domain maps to 266-470 (YNIEVLLGVD…HSYDCLLDDP (205 aa)). 10 cysteine pairs are disulfide-bonded: Cys-343/Cys-392, Cys-386/Cys-465, Cys-425/Cys-451, Cys-492/Cys-517, Cys-503/Cys-526, Cys-512/Cys-545, Cys-539/Cys-550, Cys-573/Cys-610, Cys-577/Cys-615, and Cys-588/Cys-600. Zn(2+) is bound at residue His-408. Residue Glu-409 is part of the active site. Positions 412 and 418 each coordinate Zn(2+). The Disintegrin domain occupies 480–560 (QLPGLHYSMN…IWLTPDILKR (81 aa)). Residues 561–616 (DGSWGAWSPFGSCSRTCGTGVKFRTRQCDNPHPANGGRTCSGLAYDFQLCSRQDCP) form the TSP type-1 1 domain. The short motif at 691–693 (RGD) is the Cell attachment site element. The tract at residues 723–851 (KVVKGTFTRS…NVDDNNVLEE (129 aa)) is spacer. 3 TSP type-1 domains span residues 854–912 (VVYE…NPQE), 914–971 (SQPV…RACS), and 975–1029 (CPGR…GPCP). Asn-949 and Asn-993 each carry an N-linked (GlcNAc...) asparagine glycan. Cystine bridges form between Cys-987-Cys-1023, Cys-991-Cys-1028, and Cys-1002-Cys-1012. The N-linked (GlcNAc...) asparagine glycan is linked to Asn-1031. One can recognise a PLAC domain in the interval 1059–1097 (SKGHCQGDKSIFCRMEVLSRYCSIPGYNKLCCKSCNLYN). N-linked (GlcNAc...) asparagine glycosylation is found at Asn-1098, Asn-1145, and Asn-1150. The tract at residues 1170 to 1191 (LEDEVQPPNLIPRRPSPYEKTR) is disordered.

As to quaternary structure, may belong to a multimeric complex. Binds specifically to collagen type XIV. The cofactor is Zn(2+). Post-translationally, the precursor is cleaved by a furin endopeptidase. Glycosylated. Can be O-fucosylated by POFUT2 on a serine or a threonine residue found within the consensus sequence C1-X(2)-(S/T)-C2-G of the TSP type-1 repeat domains where C1 and C2 are the first and second cysteine residue of the repeat, respectively. Fucosylated repeats can then be further glycosylated by the addition of a beta-1,3-glucose residue by the glucosyltransferase, B3GALTL. Fucosylation mediates the efficient secretion of ADAMTS family members. Can also be C-glycosylated with one or two mannose molecules on tryptophan residues within the consensus sequence W-X-X-W of the TPRs, and N-glycosylated. These other glycosylations can also facilitate secretion. Expressed at high level in skin, bone, tendon and aorta and at low levels in thymus and brain.

The protein resides in the secreted. It localises to the extracellular space. It is found in the extracellular matrix. The enzyme catalyses Cleaves the N-propeptide of collagen chain alpha1(I) at Pro-|-Gln and of alpha1(II) and alpha2(I) at Ala-|-Gln.. In terms of biological role, cleaves the propeptides of type I and II collagen prior to fibril assembly. Does not act on type III collagen. Cleaves lysyl oxidase LOX at a site downstream of its propeptide cleavage site to produce a short LOX form with reduced collagen-binding activity. The chain is A disintegrin and metalloproteinase with thrombospondin motifs 2 (ADAMTS2) from Homo sapiens (Human).